A 214-amino-acid chain; its full sequence is Putative AgrB-like protein 2 (214 aa).

5 consecutive transmembrane segments (helical) span residues 41–61 (IISV…LIFL), 83–103 (TLLG…SFFA), 109–129 (LVVF…FKFA), 154–174 (ILTI…NSGW), and 179–199 (PVML…TYIG).

Belongs to the AgrB family.

The protein resides in the cell membrane. Its function is as follows. May be involved in the proteolytic processing of a quorum sensing system signal molecule precursor. The sequence is that of Putative AgrB-like protein 2 from Clostridium perfringens (strain 13 / Type A).